A 515-amino-acid polypeptide reads, in one-letter code: Cytochrome P450 2D7 (515 aa).

The Extracellular segment spans residues Met1–Gly2. The helical transmembrane segment at Leu3–Met23 threads the bilayer. At His24–Asn301 the chain is on the cytoplasmic side. The helical transmembrane segment at Leu302–Ile322 threads the bilayer. Over Leu323–Arg515 the chain is Extracellular. Asn416 is a glycosylation site (N-linked (GlcNAc...) asparagine). Heme is bound at residue Cys461.

This sequence belongs to the cytochrome P450 family. It depends on heme as a cofactor. Expressed in brain cortex (at protein level).

It localises to the membrane. The protein localises to the cytoplasm. Its subcellular location is the mitochondrion. The enzyme catalyses an organic molecule + reduced [NADPH--hemoprotein reductase] + O2 = an alcohol + oxidized [NADPH--hemoprotein reductase] + H2O + H(+). Its function is as follows. May be responsible for the metabolism of many drugs and environmental chemicals that it oxidizes. It may be involved in the metabolism of codeine to morphine. However, another study could not confirm it. The polypeptide is Cytochrome P450 2D7 (Homo sapiens (Human)).